A 1935-amino-acid polypeptide reads, in one-letter code: Myosin-7 (1935 aa).

In terms of domain architecture, Myosin N-terminal SH3-like spans 32–81 (DLKKDVFVPDDKEEFVKATILSREGGKVTAETEHGKTVTVKEDQVLQQNP). A Myosin motor domain is found at 85 to 778 (DKIEDMAMLT…LLGLLEEMRD (694 aa)). N6,N6,N6-trimethyllysine is present on Lys-129. 178-185 (GESGAGKT) lines the ATP pocket. Residue Thr-378 is modified to Phosphothreonine. 2 actin-binding regions span residues 655–677 (LNKL…IPNE) and 757–771 (KFGH…GLLG). In terms of domain architecture, IQ spans 781-810 (LSRIITRIQAQSRGVLSRMEFKKLLERRDS). Residues 839 to 1935 (LLKSAETEKE…DIGTKGLNEE (1097 aa)) adopt a coiled-coil conformation. Ser-1137 and Ser-1269 each carry phosphoserine. Residue Thr-1282 is modified to Phosphothreonine. Phosphotyrosine is present on Tyr-1308. At Thr-1309 the chain carries Phosphothreonine. The residue at position 1510 (Ser-1510) is a Phosphoserine. A Phosphothreonine modification is found at Thr-1513. The segment at 1907 to 1935 (EERADIAESQVNKLRAKSRDIGTKGLNEE) is disordered. The segment covering 1923-1935 (KSRDIGTKGLNEE) has biased composition (basic and acidic residues).

It belongs to the TRAFAC class myosin-kinesin ATPase superfamily. Myosin family. Muscle myosin is a hexameric protein that consists of 2 heavy chain subunits (MHC), 2 alkali light chain subunits (MLC) and 2 regulatory light chain subunits (MLC-2). Interacts with ECPAS. Interacts (via C-terminus) with LRRC39.

The protein resides in the cytoplasm. Its subcellular location is the myofibril. The protein localises to the sarcomere. Myosins are actin-based motor molecules with ATPase activity essential for muscle contraction. Forms regular bipolar thick filaments that, together with actin thin filaments, constitute the fundamental contractile unit of skeletal and cardiac muscle. This Bos taurus (Bovine) protein is Myosin-7 (MYH7).